Here is a 269-residue protein sequence, read N- to C-terminus: Formamidopyrimidine-DNA glycosylase (269 aa).

Pro-2 acts as the Schiff-base intermediate with DNA in catalysis. Glu-3 serves as the catalytic Proton donor. Lys-57 serves as the catalytic Proton donor; for beta-elimination activity. DNA is bound by residues His-90, Arg-109, and Lys-150. The segment at 235-269 (QVYGRKGEPCRVCGTPIVATKHAQRATFYCRQCQK) adopts an FPG-type zinc-finger fold. The active-site Proton donor; for delta-elimination activity is Arg-259.

Belongs to the FPG family. In terms of assembly, monomer. Zn(2+) is required as a cofactor.

It carries out the reaction Hydrolysis of DNA containing ring-opened 7-methylguanine residues, releasing 2,6-diamino-4-hydroxy-5-(N-methyl)formamidopyrimidine.. The catalysed reaction is 2'-deoxyribonucleotide-(2'-deoxyribose 5'-phosphate)-2'-deoxyribonucleotide-DNA = a 3'-end 2'-deoxyribonucleotide-(2,3-dehydro-2,3-deoxyribose 5'-phosphate)-DNA + a 5'-end 5'-phospho-2'-deoxyribonucleoside-DNA + H(+). In terms of biological role, involved in base excision repair of DNA damaged by oxidation or by mutagenic agents. Acts as a DNA glycosylase that recognizes and removes damaged bases. Has a preference for oxidized purines, such as 7,8-dihydro-8-oxoguanine (8-oxoG). Has AP (apurinic/apyrimidinic) lyase activity and introduces nicks in the DNA strand. Cleaves the DNA backbone by beta-delta elimination to generate a single-strand break at the site of the removed base with both 3'- and 5'-phosphates. The sequence is that of Formamidopyrimidine-DNA glycosylase from Escherichia coli O157:H7.